We begin with the raw amino-acid sequence, 297 residues long: Ribosomal protein L11 methyltransferase (297 aa).

Positions 150, 171, 193, and 233 each coordinate S-adenosyl-L-methionine.

This sequence belongs to the methyltransferase superfamily. PrmA family.

The protein localises to the cytoplasm. It catalyses the reaction L-lysyl-[protein] + 3 S-adenosyl-L-methionine = N(6),N(6),N(6)-trimethyl-L-lysyl-[protein] + 3 S-adenosyl-L-homocysteine + 3 H(+). Its function is as follows. Methylates ribosomal protein L11. The polypeptide is Ribosomal protein L11 methyltransferase (Laribacter hongkongensis (strain HLHK9)).